The sequence spans 364 residues: MQERHTEQDYRALLIADTPIIDVRAPIEFEQGAMPAAINLPLMNNDERAAVGICYKQQGSDAALAQGHKLVAGEIRQQRMDAWRAACLQNPHGILCCARGGQRSHIVQRWLHDAGIDYPLVEGGYKALRQTAIQATIELAQKPIVLIGGCTGSGKTLLVQQQPNGVDLEGLARHRGSAFGRTLQPQLSQASFENLLAAEMLKTDAHQDLRLWVLEDESRMIGSNHLPECLRERMTQATIAVVEDPFEIRLERLNEEYFLRMHHDFTHAYGDEQGWQEYCEYLHHGLSAIKRRLGLQRYNELAARLDAALTTQLTTGSTDGHLAWLVPLLEEYYDPMYRYQLEKKAEKVVFHGEWAEVAEWVKTQ.

In terms of domain architecture, Rhodanese spans 14 to 137 (LIADTPIIDV…LRQTAIQATI (124 aa)). Catalysis depends on Cys97, which acts as the S-selanylcysteine intermediate.

It belongs to the SelU family. In terms of assembly, monomer.

It catalyses the reaction 5-methylaminomethyl-2-thiouridine(34) in tRNA + selenophosphate + (2E)-geranyl diphosphate + H2O + H(+) = 5-methylaminomethyl-2-selenouridine(34) in tRNA + (2E)-thiogeraniol + phosphate + diphosphate. The catalysed reaction is 5-methylaminomethyl-2-thiouridine(34) in tRNA + (2E)-geranyl diphosphate = 5-methylaminomethyl-S-(2E)-geranyl-thiouridine(34) in tRNA + diphosphate. It carries out the reaction 5-methylaminomethyl-S-(2E)-geranyl-thiouridine(34) in tRNA + selenophosphate + H(+) = 5-methylaminomethyl-2-(Se-phospho)selenouridine(34) in tRNA + (2E)-thiogeraniol. The enzyme catalyses 5-methylaminomethyl-2-(Se-phospho)selenouridine(34) in tRNA + H2O = 5-methylaminomethyl-2-selenouridine(34) in tRNA + phosphate. Its function is as follows. Involved in the post-transcriptional modification of the uridine at the wobble position (U34) of tRNA(Lys), tRNA(Glu) and tRNA(Gln). Catalyzes the conversion of 2-thiouridine (S2U-RNA) to 2-selenouridine (Se2U-RNA). Acts in a two-step process involving geranylation of 2-thiouridine (S2U) to S-geranyl-2-thiouridine (geS2U) and subsequent selenation of the latter derivative to 2-selenouridine (Se2U) in the tRNA chain. In Escherichia coli O127:H6 (strain E2348/69 / EPEC), this protein is tRNA 2-selenouridine synthase.